The following is a 189-amino-acid chain: Histidinol-phosphate aminotransferase (189 aa).

It belongs to the class-II pyridoxal-phosphate-dependent aminotransferase family. Histidinol-phosphate aminotransferase subfamily. Homodimer. Pyridoxal 5'-phosphate is required as a cofactor.

The catalysed reaction is L-histidinol phosphate + 2-oxoglutarate = 3-(imidazol-4-yl)-2-oxopropyl phosphate + L-glutamate. Its pathway is amino-acid biosynthesis; L-histidine biosynthesis; L-histidine from 5-phospho-alpha-D-ribose 1-diphosphate: step 7/9. The chain is Histidinol-phosphate aminotransferase (hisC) from Thiocapsa roseopersicina.